Consider the following 133-residue polypeptide: Small ribosomal subunit protein uS8 (133 aa).

The protein belongs to the universal ribosomal protein uS8 family. As to quaternary structure, part of the 30S ribosomal subunit. Contacts proteins S5 and S12.

Functionally, one of the primary rRNA binding proteins, it binds directly to 16S rRNA central domain where it helps coordinate assembly of the platform of the 30S subunit. The sequence is that of Small ribosomal subunit protein uS8 from Rippkaea orientalis (strain PCC 8801 / RF-1) (Cyanothece sp. (strain PCC 8801)).